The primary structure comprises 325 residues: ADP-ribose glycohydrolase MACROD1 (325 aa).

Lysine 96, lysine 103, and lysine 129 each carry N6-succinyllysine. Lysine 138 participates in a covalent cross-link: Glycyl lysine isopeptide (Lys-Gly) (interchain with G-Cter in SUMO2). In terms of domain architecture, Macro spans 141–322; it reads EPRYKKDKQL…IYRSRLPHYF (182 aa). 159–161 serves as a coordination point for substrate; it reads SDI. Lysine 163 bears the N6-acetyllysine mark. Residues 172 to 174, 179 to 184, 267 to 273, and phenylalanine 306 contribute to the substrate site; these read AAN, GGGGVD, and ISTGVFG.

It belongs to the MacroD-type family. MacroD1/2-like subfamily. As to quaternary structure, interacts with ESR1; Interacts in a manner that is estrogen independent but is enhanced by estrogen. Interacts (via macro domain) with AR.

Its subcellular location is the nucleus. The enzyme catalyses 3''-O-acetyl-ADP-D-ribose + H2O = ADP-D-ribose + acetate + H(+). The catalysed reaction is 2''-O-acetyl-ADP-D-ribose + H2O = ADP-D-ribose + acetate + H(+). It catalyses the reaction 4-O-(ADP-D-ribosyl)-L-aspartyl-[protein] + H2O = L-aspartyl-[protein] + ADP-D-ribose + H(+). It carries out the reaction 5-O-(ADP-D-ribosyl)-L-glutamyl-[protein] + H2O = L-glutamyl-[protein] + ADP-D-ribose + H(+). The enzyme catalyses alpha-NAD(+) + H2O = ADP-D-ribose + nicotinamide + H(+). With respect to regulation, subject to competitive inhibition by the product ADP-ribose. Its function is as follows. Removes ADP-ribose from aspartate and glutamate residues in proteins bearing a single ADP-ribose moiety. Inactive towards proteins bearing poly-ADP-ribose. Deacetylates O-acetyl-ADP ribose, a signaling molecule generated by the deacetylation of acetylated lysine residues in histones and other proteins. Plays a role in estrogen signaling. Binds to androgen receptor (AR) and amplifies the transactivation function of AR in response to androgen. May play an important role in carcinogenesis and/or progression of hormone-dependent cancers by feed-forward mechanism that activates ESR1 transactivation. Could be an ESR1 coactivator, providing a positive feedback regulatory loop for ESR1 signal transduction. Could be involved in invasive growth by down-regulating CDH1 in endometrial cancer cells. Enhances ESR1-mediated transcription activity. The polypeptide is ADP-ribose glycohydrolase MACROD1 (Homo sapiens (Human)).